An 88-amino-acid chain; its full sequence is Small ribosomal subunit protein uS17 (88 aa).

This sequence belongs to the universal ribosomal protein uS17 family. As to quaternary structure, part of the 30S ribosomal subunit.

Functionally, one of the primary rRNA binding proteins, it binds specifically to the 5'-end of 16S ribosomal RNA. The polypeptide is Small ribosomal subunit protein uS17 (Lactobacillus gasseri (strain ATCC 33323 / DSM 20243 / BCRC 14619 / CIP 102991 / JCM 1131 / KCTC 3163 / NCIMB 11718 / NCTC 13722 / AM63)).